The following is a 539-amino-acid chain: Carboxysome assembly protein CcmM (539 aa).

Positions 1–214 are carbonic anhydrase-like domain; sequence MPSPTTVPVA…PLRPSSSEAT (214 aa). Residues 194-213 are disordered; it reads TADFHSTPTPSPLRPSSSEA. One copy of the RbcS-like repeat 1, SSUL1 repeat lies at 226–397; the sequence is SSEVITQVRS…VLAELENCLS (172 aa). 2 disulfide bridges follow: cysteine 261–cysteine 279 and cysteine 377–cysteine 395. The RbcS-like repeat 2, SSUL2 repeat unit spans residues 341–425; it reads LSAEVVNKVR…RVFEALIQDP (85 aa). The interval 427–459 is disordered; the sequence is GPVGSAKAAAAPVSSATPSSHSYTSNGSSSSDV. The span at 431 to 457 shows a compositional bias: low complexity; the sequence is SAKAAAAPVSSATPSSHSYTSNGSSSS. One copy of the RbcS-like repeat 3, SSUL3 repeat lies at 453 to 539; sequence GSSSSDVAGQ…RVAELLIQKP (87 aa).

The protein belongs to the gamma-class carbonic anhydrase family. As to quaternary structure, probably a homotrimer. Purifies from carboxysomes in complex with both RuBisCO subunits and carbonic anhydrase (ccaA); the complex is probably associated with the carboxysome shell. Interacts with CcmN. Binds holo-RuBisCO (RbcL(8)-RbcS(8)) via its SSUL domains; the SSUL domain binds close to the equitorial domain of RuBisCO between RbcL dimers, with 1 M35 protein per dimer. In terms of assembly, the short form purifies from carboxysomes in complex with both RuBisCO subunits; the complex is probably associated with the carboxysome shell. Post-translationally, identified as 2 proteins of 58 and 38 kDa by mass spectrometry, called M58 and M35, the shorter protein is translated starting at Val-216. Protease inhibitors do not alter the appearance of M35. In isolated carboxysomes M35 is 4-5 fold more abundant. The first amino acid (equivalent to Val-216) is not seen in Edman degradation, while Tyr-219 and Gln-222 may be post-translationally modified.

The protein resides in the carboxysome. Its function is as follows. Functions as a scaffold protein for the assembly of beta-carboxysomes, initiates carboxysome assembly by coalescing RuBisCO (ribulose bisphosphate carboxylase, rbcL-rbcS). Produced as a full-length (M58) and a shorter form (M35); both forms are required for correct carboxysome assembly and growth. The short form is more abundant. Despite its strong similarity to gamma-class carbonic anhydrase (CA) it does not have detectable CA activity. Functionally, the M35 isoform is able to condense RuBisCO into a liquid matrix; the presence of disulfide bonds in M35 reduces affinity for RuBisCO, while mutating all 4 Cys to Ser causes a 4-fold increase in doubling time, more than 15% increase in CO(2) requirement, and abnormal carboxysomes. Beta-carboxysome assembly initiates when soluble RuBisCO is condensed into a liquid matrix in a pre-carboxysome by the RbcS-like domains of probably both CcmM58 and CcmM35. CcmN interacts with the N-terminus of CcmM58, and then recruits the CcmK2 major shell protein plus other less abundant CcmK proteins via CcmN's encapsulation peptide. Shell formation requires CcmK proteins and CcmO. CcmL caps the otherwise elongated carboxysome. Once fully encapsulated carboxysomes are formed, they migrate within the cell probably via interactions with the cytoskeleton. This chain is Carboxysome assembly protein CcmM, found in Synechococcus elongatus (strain ATCC 33912 / PCC 7942 / FACHB-805) (Anacystis nidulans R2).